A 20-amino-acid polypeptide reads, in one-letter code: Tetracycline resistance leader peptide (20 aa).

The chain is Tetracycline resistance leader peptide (tetL) from Bacillus cereus.